The following is a 452-amino-acid chain: Pup--protein ligase (452 aa).

Mg(2+) is bound at residue Glu-9. An ATP-binding site is contributed by Arg-53. Residue Tyr-55 participates in Mg(2+) binding. Asp-57 (proton acceptor) is an active-site residue. Position 63 (Glu-63) interacts with Mg(2+). Thr-66 and Trp-419 together coordinate ATP.

It belongs to the Pup ligase/Pup deamidase family. Pup-conjugating enzyme subfamily.

It carries out the reaction ATP + [prokaryotic ubiquitin-like protein]-L-glutamate + [protein]-L-lysine = ADP + phosphate + N(6)-([prokaryotic ubiquitin-like protein]-gamma-L-glutamyl)-[protein]-L-lysine.. It functions in the pathway protein degradation; proteasomal Pup-dependent pathway. Its pathway is protein modification; protein pupylation. Functionally, catalyzes the covalent attachment of the prokaryotic ubiquitin-like protein modifier Pup to the proteasomal substrate proteins, thereby targeting them for proteasomal degradation. This tagging system is termed pupylation. The ligation reaction involves the side-chain carboxylate of the C-terminal glutamate of Pup and the side-chain amino group of a substrate lysine. This Streptosporangium roseum (strain ATCC 12428 / DSM 43021 / JCM 3005 / KCTC 9067 / NCIMB 10171 / NRRL 2505 / NI 9100) protein is Pup--protein ligase.